The chain runs to 298 residues: Arginine/serine-rich protein 1 (298 aa).

A disordered region spans residues 1–135 (MSSAAMSKYV…SRSRSRGRSQ (135 aa)). Position 17 is a phosphoserine (Ser-17). Low complexity predominate over residues 23 to 36 (SPSTSGSGRSSRLS). Positions 60 to 105 (SRSHSRPRRSRRSRSRSRRRHQRKYRRYSRSYSRSRSRSRSHRYHR) are enriched in basic residues. Phosphoserine is present on residues Ser-118 and Ser-120. The span at 124 to 135 (SRSRSRSRGRSQ) shows a compositional bias: basic residues. Arg-145 is subject to Omega-N-methylarginine. 2 disordered regions span residues 161–181 (RPRW…TPFR) and 218–298 (ASQG…WIPV). Polar residues predominate over residues 219–228 (SQGTAVSSSG). Residues 230-246 (KVEHSEKQTEDATKNTS) are compositionally biased toward basic and acidic residues. Polar residues predominate over residues 247–271 (EKSSTQRNIAFSSNNSVAKPLQKTT). The segment covering 274-289 (AVEEKSSGSPKIDKKK) has biased composition (basic and acidic residues). Ser-282 carries the phosphoserine modification.

The protein belongs to the RSRP family. In terms of processing, phosphorylated. Phosphorylation at Ser-118 and Ser-120 mediates the interaction with spliceosome proteins.

It localises to the nucleus. Probably acts as a spliceosomal factor that contributes to spliceosome assembly and regulates the isoform switching of proteins such as PARP6. This is Arginine/serine-rich protein 1 (Rsrp1) from Mus musculus (Mouse).